Here is a 444-residue protein sequence, read N- to C-terminus: Probable glycine dehydrogenase (decarboxylating) subunit 1 (444 aa).

Belongs to the GcvP family. N-terminal subunit subfamily. In terms of assembly, the glycine cleavage system is composed of four proteins: P, T, L and H. In this organism, the P 'protein' is a heterodimer of two subunits.

The catalysed reaction is N(6)-[(R)-lipoyl]-L-lysyl-[glycine-cleavage complex H protein] + glycine + H(+) = N(6)-[(R)-S(8)-aminomethyldihydrolipoyl]-L-lysyl-[glycine-cleavage complex H protein] + CO2. Its function is as follows. The glycine cleavage system catalyzes the degradation of glycine. The P protein binds the alpha-amino group of glycine through its pyridoxal phosphate cofactor; CO(2) is released and the remaining methylamine moiety is then transferred to the lipoamide cofactor of the H protein. The sequence is that of Probable glycine dehydrogenase (decarboxylating) subunit 1 from Prosthecochloris aestuarii (strain DSM 271 / SK 413).